Here is a 424-residue protein sequence, read N- to C-terminus: Protein CLP1 homolog 5 (424 aa).

ATP contacts are provided by residues Glu16, Thr56, and Asp124–Thr129.

It belongs to the Clp1 family. Clp1 subfamily. Forms a complex with cleavage and polyadenylation specificity factor (CPSF) subunits PCFS1, FIPS3 and CPSF30.

It localises to the nucleus. Required for endonucleolytic cleavage during polyadenylation-dependent pre-mRNA 3'-end formation. This Arabidopsis thaliana (Mouse-ear cress) protein is Protein CLP1 homolog 5.